The chain runs to 984 residues: Calsyntenin-1 (984 aa).

The signal sequence occupies residues 1–18 (MRTAYFIFVGALLGVSYA). Over 19 to 850 (KHHHAARAPI…VGQGAIAGGA (832 aa)) the chain is Extracellular. Cadherin domains lie at 66–142 (YLLT…APEI) and 143–257 (ENPW…APGV). Residues Asn-206 and Asn-305 are each glycosylated (N-linked (GlcNAc...) asparagine). Residues 851-871 (VAVVVVVCVGFLLVLLVIGVL) form a helical membrane-spanning segment. The Cytoplasmic portion of the chain corresponds to 872 to 984 (KMRDTPMPRR…ISTNARSYRV (113 aa)). The disordered stretch occupies residues 878-959 (MPRRRRQKRQ…QTEVLPHLDA (82 aa)). The segment covering 886-896 (RQSDGGMHWDD) has biased composition (basic and acidic residues). A compositionally biased stretch (acidic residues) spans 918–951 (EFSDEEEEEETDGESECSYRDEEDDVSEDEEDQT).

This sequence belongs to the calsyntenin family. Interacts with isoform c of daf-2 (daf-2c); promoting daf-2c localization to synaptic regions. Interacts with klc-2. Interacts with unc-104. Post-translationally, a proportion of the protein is proteolytically cleaved before the transmembrane domain in neurons, leading to release in the extracellular space. As to expression, widely expressed in the nervous system. Highly expressed in many head neurons, including most amphid sensory neurons. Also expressed in other tissues, such as intestine and gonadal sheath cells.

Its subcellular location is the golgi apparatus membrane. It localises to the perikaryon. It is found in the cell projection. The protein localises to the axon. The protein resides in the secreted. Its subcellular location is the synaptic cleft. In terms of biological role, cell adhesion molecule involved in associative learning and memory. Acts as a regulator of GABAergic synaptic transmission at neuromuscular junctions by regulating GABA synaptic vesicle precursor transport: possibly functions as a cargo adapter for unc-104-mediated transport of synaptic vesicle precursors. Promotes localization of isoform c of daf-2 (daf-2c) to synaptic regions by acting as a signaling adapter between klc-2 and daf-2c. Its function is as follows. Acts as aregulator of glutamate signaling in the sensory neurons by inhibiting the activity of command interneurons, thereby negatively regulating motor circuit activity and locomotion. The sequence is that of Calsyntenin-1 from Caenorhabditis elegans.